The primary structure comprises 858 residues: MSASVAEPPPALSRKAEFKAAKAELLARFKSANHVTPLMHALSRATDDALRSLWQECGLPATLALVAVGGFGRGELSPHSDVDILVLLPDAHASELDERIERFIGMAWDLGLEIGSSVRTVDQCIEEASHDVTVQTSLLEARRIVGSTALFERFMLRYREALDARAFFQAKVLEMRQRHAKFQNTPYSLEPNVKESPGGLRDLQTILWIARAAGFGSSWRELDTRGLITDREARELRRNEGFLKTLRARLHVIAGRRQDILVFDLQTQAAESFGYQPTSAKRASEQLMRRYYWAAKAVTQLATILIQNIEAQLFPATSGVTRVLSPGRFVEKQGMLEIAADDVFERHPDAILEAFLLYEATRGVKGLSARTLRALYNSRDVMNNAWRRDPRNRHTFMQILQQPEGITHAFRLMNQTSVLGRYLLNFRRIVGQMQHDLYHVYTVDQHILMVLRNIRRFAVAEHAHEYPFCSQLIVNFERPWVLYVAALFHDIAKGRGGDHSALGMADARRFCREHGIEGDDAALVVWLVQHHLTMSQVAQKQDTSDPVVIKRFAELVGSERRLTALYLLTVADIRGTSPKVWNTWKGKLLEDLYRATLAVLGGAQPDAHSELKTRQEEALALLRLETVPPDAHRALWDQLDVGYFLRHDAADIAWQTRVLYRHVAADTAIVRARPSPVGDALQVLVYVKDRSDLFAGICAYFDRNGLSVLDARVNTTRHGYALDNFIVTQTEHDVQYRDIANLVEQQLAARLAESAPLPEPSKGRLSRLSRTFPITPRVDLRADERGQYYILSVSANDRPGLLYSIARVLAEHRVGVHAARINTLGERVEDVFMLDGTGLSDNRLQIQVETELLRAIAV.

Positions 1–324 (MSASVAEPPP…PATSGVTRVL (324 aa)) are uridylyltransferase. The uridylyl-removing stretch occupies residues 325-681 (SPGRFVEKQG…ARPSPVGDAL (357 aa)). An HD domain is found at 443–565 (VDQHILMVLR…VGSERRLTAL (123 aa)). ACT domains lie at 682–761 (QVLV…PEPS) and 790–858 (ILSV…AIAV).

This sequence belongs to the GlnD family. The cofactor is Mg(2+).

The catalysed reaction is [protein-PII]-L-tyrosine + UTP = [protein-PII]-uridylyl-L-tyrosine + diphosphate. It catalyses the reaction [protein-PII]-uridylyl-L-tyrosine + H2O = [protein-PII]-L-tyrosine + UMP + H(+). Its activity is regulated as follows. Uridylyltransferase (UTase) activity is inhibited by glutamine, while glutamine activates uridylyl-removing (UR) activity. Modifies, by uridylylation and deuridylylation, the PII regulatory proteins (GlnB and homologs), in response to the nitrogen status of the cell that GlnD senses through the glutamine level. Under low glutamine levels, catalyzes the conversion of the PII proteins and UTP to PII-UMP and PPi, while under higher glutamine levels, GlnD hydrolyzes PII-UMP to PII and UMP (deuridylylation). Thus, controls uridylylation state and activity of the PII proteins, and plays an important role in the regulation of nitrogen assimilation and metabolism. This chain is Bifunctional uridylyltransferase/uridylyl-removing enzyme, found in Burkholderia mallei (strain ATCC 23344).